Consider the following 203-residue polypeptide: Chemotactic transduction protein ChpE (203 aa).

5 helical membrane-spanning segments follow: residues 3–23 (AIFLAALLFGFAFNVSPGAVF), 46–66 (LIGDAVWALLGLTGLALLLGY), 69–89 (VRIPLTLACAAYLAWLGVQGL), 123–143 (NVVYWGALGSALAGIVDGTPN), and 149–169 (VFFAGFMLSSLIWCFCCAALV).

This sequence belongs to the Rht family.

It is found in the cell membrane. This chain is Chemotactic transduction protein ChpE (chpE), found in Pseudomonas aeruginosa (strain ATCC 15692 / DSM 22644 / CIP 104116 / JCM 14847 / LMG 12228 / 1C / PRS 101 / PAO1).